The following is an 87-amino-acid chain: Small ribosomal subunit protein bS16 (87 aa).

The protein belongs to the bacterial ribosomal protein bS16 family.

The chain is Small ribosomal subunit protein bS16 from Variovorax paradoxus (strain S110).